The sequence spans 1388 residues: Dicer-like protein 2 (1388 aa).

The Helicase ATP-binding domain occupies Met23–Ala203. Residue Met36–Thr43 participates in ATP binding. Residues Asp144 to His147 carry the DEAH box motif. In terms of domain architecture, Helicase C-terminal spans Lys368–Ser537. The 95-residue stretch at Ala564 to Lys658 folds into the Dicer dsRNA-binding fold domain. 2 consecutive RNase III domains span residues Ile906 to Gly1059 and Asn1098 to Gly1281. 3 residues coordinate Mg(2+): Glu1137, Asp1267, and Glu1270.

The protein belongs to the helicase family. Dicer subfamily. Requires Mg(2+) as cofactor. It depends on Mn(2+) as a cofactor.

In terms of biological role, dicer-like endonuclease involved in cleaving double-stranded RNA in the RNA interference (RNAi) pathway. Produces 21 to 25 bp dsRNAs (siRNAs) which target the selective destruction of homologous RNAs leading to sequence-specific suppression of gene expression, called post-transcriptional gene silencing (PTGS). Part of a broad host defense response against viral infection and transposons. This is Dicer-like protein 2 (dcl2) from Aspergillus fumigatus (strain ATCC MYA-4609 / CBS 101355 / FGSC A1100 / Af293) (Neosartorya fumigata).